Reading from the N-terminus, the 243-residue chain is 23S rRNA (guanosine-2'-O-)-methyltransferase RlmB (243 aa).

3 residues coordinate S-adenosyl-L-methionine: glycine 196, isoleucine 216, and leucine 225.

Belongs to the class IV-like SAM-binding methyltransferase superfamily. RNA methyltransferase TrmH family. RlmB subfamily. Homodimer.

The protein resides in the cytoplasm. It carries out the reaction guanosine(2251) in 23S rRNA + S-adenosyl-L-methionine = 2'-O-methylguanosine(2251) in 23S rRNA + S-adenosyl-L-homocysteine + H(+). Functionally, specifically methylates the ribose of guanosine 2251 in 23S rRNA. In Shigella flexneri, this protein is 23S rRNA (guanosine-2'-O-)-methyltransferase RlmB.